We begin with the raw amino-acid sequence, 35 residues long: MSDIN-like toxin proprotein 6 (35 aa).

Positions 1–10 are excised as a propeptide; that stretch reads MSDINGTRLP. A cross-link (cyclopeptide (Ile-Pro)) is located at residues 11–20; that stretch reads IPGLIPLGIP. A propeptide spanning residues 21 to 35 is cleaved from the precursor; the sequence is CVSDDVNPTLTRGER.

The protein belongs to the MSDIN fungal toxin family. Processed by the macrocyclase-peptidase enzyme POPB to yield a toxic cyclic decapeptide. POPB first removes 10 residues from the N-terminus. Conformational trapping of the remaining peptide forces the enzyme to release this intermediate rather than proceed to macrocyclization. The enzyme rebinds the remaining peptide in a different conformation and catalyzes macrocyclization of the N-terminal 10 residues.

Functionally, probable toxin that belongs to the MSDIN-like toxin family responsible for a large number of food poisoning cases and deaths. The protein is MSDIN-like toxin proprotein 6 of Amanita bisporigera (Destroying angel).